A 202-amino-acid polypeptide reads, in one-letter code: Kunitz-type protein bli-5 (202 aa).

Residues 1 to 20 form the signal peptide; the sequence is MVSIHNSFILLMLMISICFC. The region spanning 135–184 is the BPTI/Kunitz inhibitor domain; that stretch reads CVHPIFDHPDDGYLSRWGFDGEQCIEFKWNPERPSSANNFKTRAHCEDYC. 2 cysteine pairs are disulfide-bonded: cysteine 135-cysteine 184 and cysteine 158-cysteine 180.

As to expression, expressed in larval and adult hypodermis, hermaphrodite vulva and adult excretory cell and duct.

Its function is as follows. Appears to lack serine protease inhibitor activity in vitro when tested with bovine pancreatic alpha-chymotrypsin and elastase. Involved in cuticle biosynthesis. In Caenorhabditis elegans, this protein is Kunitz-type protein bli-5.